The following is a 190-amino-acid chain: Potassium-transporting ATPase KdpC subunit (190 aa).

A helical transmembrane segment spans residues 10-30 (VLFAVLTLICGVIYPYAITGI).

The protein belongs to the KdpC family. In terms of assembly, the system is composed of three essential subunits: KdpA, KdpB and KdpC.

The protein localises to the cell inner membrane. In terms of biological role, part of the high-affinity ATP-driven potassium transport (or Kdp) system, which catalyzes the hydrolysis of ATP coupled with the electrogenic transport of potassium into the cytoplasm. This subunit acts as a catalytic chaperone that increases the ATP-binding affinity of the ATP-hydrolyzing subunit KdpB by the formation of a transient KdpB/KdpC/ATP ternary complex. This is Potassium-transporting ATPase KdpC subunit from Herminiimonas arsenicoxydans.